We begin with the raw amino-acid sequence, 204 residues long: Large ribosomal subunit protein uL4 (204 aa).

Residues 42 to 55 (GSRQGSKAQKNRSA) show a composition bias toward polar residues. Residues 42–85 (GSRQGSKAQKNRSAVSGGGKRPWAQKGTGRARAGTTRGPIWRSG) form a disordered region. Low complexity predominate over residues 68–79 (GTGRARAGTTRG).

This sequence belongs to the universal ribosomal protein uL4 family. Part of the 50S ribosomal subunit.

Functionally, one of the primary rRNA binding proteins, this protein initially binds near the 5'-end of the 23S rRNA. It is important during the early stages of 50S assembly. It makes multiple contacts with different domains of the 23S rRNA in the assembled 50S subunit and ribosome. Forms part of the polypeptide exit tunnel. The protein is Large ribosomal subunit protein uL4 of Vesicomyosocius okutanii subsp. Calyptogena okutanii (strain HA).